An 863-amino-acid polypeptide reads, in one-letter code: Leucine--tRNA ligase (863 aa).

A 'HIGH' region motif is present at residues 41–51 (PYPSGRIHIGH). The 'KMSKS' region motif lies at 627–631 (KMSKS). An ATP-binding site is contributed by Lys-630.

It belongs to the class-I aminoacyl-tRNA synthetase family.

Its subcellular location is the cytoplasm. The enzyme catalyses tRNA(Leu) + L-leucine + ATP = L-leucyl-tRNA(Leu) + AMP + diphosphate. This Jannaschia sp. (strain CCS1) protein is Leucine--tRNA ligase.